Consider the following 445-residue polypeptide: MSTILKSLPQGENVGIAFSGGLDTSAALLWMKQKGARVFAYTANLGQPDEADYDEIPRKAMEFGAEKARLVDCRSQLVHEGIAAIQAGAFHVSTGGIAYFNTTPLGRAVTGTMLVSAMKEDGVNIWGDGSTYKGNDIERFYRYGLLTNPDLRIYKPWLDQQFIDELGGRAEMSAFMTAAGFAYKMSSEKAYSTDSNLLGATHEAKDLERLDSGIKIVNPIMGVPFWRDDCAVKAETVAVRFVDGQPVALNGQTFADPVALFLEANAIGGRHGLGMSDQIENRIIEAKSRGIYEAPGMALLHIAYERLVTGIHNEDTIEQYRISGMRLGRLLYQGRWFDSQALMLRETAQRWVARAITGEVTLELRRGNDYSILNTESPNLTYAPERLSMEKVEDAPFTPADRIGQLTMRNLDITDTRAKLDIFAKAGLLSAGEGSHIPKLESDKG.

Residues 17-25 (AFSGGLDTS) and A43 each bind ATP. Y99 is an L-citrulline binding site. G129 and T131 together coordinate ATP. Residues T131, N135, and D136 each coordinate L-aspartate. N135 serves as a coordination point for L-citrulline. D136 is a binding site for ATP. The L-citrulline site is built by R139 and S192. D194 contributes to the ATP binding site. The L-citrulline site is built by T201, E203, and E280.

Belongs to the argininosuccinate synthase family. Type 2 subfamily. As to quaternary structure, homotetramer.

It localises to the cytoplasm. The enzyme catalyses L-citrulline + L-aspartate + ATP = 2-(N(omega)-L-arginino)succinate + AMP + diphosphate + H(+). Its pathway is amino-acid biosynthesis; L-arginine biosynthesis; L-arginine from L-ornithine and carbamoyl phosphate: step 2/3. The sequence is that of Argininosuccinate synthase from Rhodopseudomonas palustris (strain BisA53).